Consider the following 428-residue polypeptide: Endoplasmic reticulum junction formation protein lunapark (428 aa).

G2 is lipidated: N-myristoyl glycine. The Cytoplasmic portion of the chain corresponds to 2 to 45 (GGLFSRWRTKPSTVEVLESIDKEIQALEEFREKNQRLQKLWVGR). Residues 16 to 41 (EVLESIDKEIQALEEFREKNQRLQKL) are a coiled coil. Residues 46–66 (LILYSSVLYLFTCLIVYLWYL) traverse the membrane as a helical segment. Residues 67 to 77 (PDEFTARLAMT) lie on the Lumenal side of the membrane. A helical membrane pass occupies residues 78-98 (LPFFAFPLIIWSIRTVIIFFF). Residues 99–428 (SKRTERNNEA…ELSGESLTAE (330 aa)) lie on the Cytoplasmic side of the membrane. Residues 102-128 (TERNNEALDDLKSQRKKILEEVMEKET) are a coiled coil. A phosphoserine mark is found at S114, S153, S177, S182, and S194. The disordered stretch occupies residues 143 to 247 (SKKAKECEPP…HPPGPPLARP (105 aa)). The span at 185-198 (QGPPPQVPVSPGPP) shows a compositional bias: pro residues. Phosphothreonine occurs at positions 211 and 213. Phosphoserine is present on residues S217 and S227. The C4-type; plays a role in ER morphology zinc finger occupies 276–301 (CQQCFSHNGMALKEEFEYIAFRCAYC). S321, S353, and S384 each carry phosphoserine. Residues 356 to 428 (HDVLDDNTEQ…ELSGESLTAE (73 aa)) are disordered. Positions 386–401 (SEEPEEKQETENEEAS) are enriched in acidic residues. S414 carries the phosphoserine modification.

The protein belongs to the lunapark family. Homodimer; homodimerization requires the C4-type zinc finger motif and decreases during mitosis in a phosphorylation-dependent manner. In terms of processing, myristoylated; myristoylation is necessary for the endoplasmic reticulum (ER) three-way ER tubular junction formation, but is not required neither for membrane translocation, membrane topology formation, nor for the specific localization to ER membranes. Post-translationally, phosphorylated. Phosphorylation occurs at Ser-177, Ser-182, Ser-217, Ser-227, Ser-321 and Ser-384 during interphase. Phosphorylation occurs at Ser-114, Ser-153, Ser-194, Thr-211 and Ser-353 during mitosis; these phosphorylations reduce both its homodimerization and the ER three-way tubular junction formation. Subject to proteasomal degradation following phosphorylation during mitosis. As to expression, expressed in neural precursor cells, where it is detected at the growth-cone-like structure and branching sites of neurite-like processes.

Its subcellular location is the endoplasmic reticulum membrane. Functionally, endoplasmic reticulum (ER)-shaping membrane protein that plays a role in determining ER morphology. Involved in the stabilization of nascent three-way ER tubular junctions within the ER network. May also play a role as a curvature-stabilizing protein within the three-way ER tubular junction network. May be involved in limb development. Is involved in central nervous system development. The polypeptide is Endoplasmic reticulum junction formation protein lunapark (Homo sapiens (Human)).